We begin with the raw amino-acid sequence, 440 residues long: Glycerol-3-phosphate dehydrogenase [NAD(+)], chloroplastic (440 aa).

Residues 1–47 constitute a chloroplast transit peptide; sequence MAAAAAATFLPHTPTPRRRLAVAVHSPTRRRLSLVFSGPPDGALSVA. A disordered region spans residues 57 to 76; that stretch reads EEAAAAVSAPRGGGGGGGKE. Residues 114 to 119, Phe-191, Lys-214, and Ala-248 contribute to the NAD(+) site; that span reads GGGSFG. Residue Lys-214 coordinates substrate. Lys-299 (proton acceptor) is an active-site residue. Residues Arg-363 and Glu-389 each contribute to the NAD(+) site. 363–364 serves as a coordination point for substrate; the sequence is RN.

This sequence belongs to the NAD-dependent glycerol-3-phosphate dehydrogenase family.

The protein resides in the plastid. It is found in the chloroplast. It catalyses the reaction sn-glycerol 3-phosphate + NAD(+) = dihydroxyacetone phosphate + NADH + H(+). The protein operates within membrane lipid metabolism; glycerophospholipid metabolism. Functionally, required to supply glycerol-3-phosphate in the chloroplast for the synthesis of glycerolipids. The polypeptide is Glycerol-3-phosphate dehydrogenase [NAD(+)], chloroplastic (Oryza sativa subsp. japonica (Rice)).